Here is a 570-residue protein sequence, read N- to C-terminus: Protein NRT1/ PTR FAMILY 8.2 (570 aa).

Position 99 is a phosphothreonine (T99). 10 helical membrane passes run 100–120 (IASFVVIYIAGMTLLTISASV), 136–156 (AGQTAITFIALYLIALGTGGI), 182–202 (FFNWFYFVINVGAMIASSVLV), 210–230 (WGWGLGVPTVAMAIAVVFFFA), 335–355 (IWATGIVFASVYSQMGTVFVL), 370–390 (IPSASLSLFDTLSVLFWAPVY), 414–434 (IGIGLVISIFSMVSAGILEVA), 454–474 (IFWQVPQYFLVGCAEVFTFIG), 493–513 (ALSLTAIAFGNYLSTFLVTLV), and 537–557 (YFFWLLAGLSFLNFLVYLWIA).

The protein belongs to the major facilitator superfamily. Proton-dependent oligopeptide transporter (POT/PTR) (TC 2.A.17) family. In terms of tissue distribution, expressed in developing and germinating pollen grains and ovules.

The protein localises to the cell membrane. Functionally, peptide transporter. Mediates the transport of di- and tripeptides. High affinity transporter. Involved in the uptake of peptides during pollen germination and tube growth. This Arabidopsis thaliana (Mouse-ear cress) protein is Protein NRT1/ PTR FAMILY 8.2 (NPF8.2).